The primary structure comprises 543 residues: Cytochrome P450 2U1 (543 aa).

The next 4 helical transmembrane spans lie at 32-52, 58-78, 261-281, and 342-362; these read PTGGALLLLVLAALLGWSWLW, GIPPGPAPWPVVGNFGFVLLP, VCLNTQLLLVNICSWLYYLPF, and LFYIIGDLFIAGTDTTTNSLL. Cys-490 lines the heme pocket. Residues 495–515 traverse the membrane as a helical segment; the sequence is LAKMELFLMFVSLMQSFTFVL.

This sequence belongs to the cytochrome P450 family. Heme is required as a cofactor.

The protein resides in the endoplasmic reticulum membrane. Its subcellular location is the microsome membrane. It is found in the mitochondrion inner membrane. The enzyme catalyses an omega-methyl-long-chain fatty acid + reduced [NADPH--hemoprotein reductase] + O2 = an omega-hydroxy-long-chain fatty acid + oxidized [NADPH--hemoprotein reductase] + H2O + H(+). It carries out the reaction (5Z,8Z,11Z,14Z)-eicosatetraenoate + reduced [NADPH--hemoprotein reductase] + O2 = 19-hydroxy-(5Z,8Z,11Z,14Z)-eicosatetraenoate + oxidized [NADPH--hemoprotein reductase] + H2O + H(+). It catalyses the reaction (5Z,8Z,11Z,14Z)-eicosatetraenoate + reduced [NADPH--hemoprotein reductase] + O2 = 20-hydroxy-(5Z,8Z,11Z,14Z)-eicosatetraenoate + oxidized [NADPH--hemoprotein reductase] + H2O + H(+). The catalysed reaction is N-[(5Z,8Z,11Z,14Z)-eicosatetraenoyl]-serotonin + reduced [NADPH--hemoprotein reductase] + O2 = 2-oxo-N-[(5Z,8Z,11Z,14Z)-eicosatetraenoyl]-serotonin + oxidized [NADPH--hemoprotein reductase] + H2O + H(+). A cytochrome P450 monooxygenase involved in the metabolism of arachidonic acid and its conjugates. Mechanistically, uses molecular oxygen inserting one oxygen atom into a substrate, and reducing the second into a water molecule, with two electrons provided by NADPH via cytochrome P450 reductase (CPR; NADPH-ferrihemoprotein reductase). Acts as an omega and omega-1 hydroxylase for arachidonic acid and possibly for other long chain fatty acids. May modulate the arachidonic acid signaling pathway and play a role in other fatty acid signaling processes. May down-regulate the biological activities of N-arachidonoyl-serotonin, an endocannabinoid that has anti-nociceptive effects through inhibition of fatty acid amide hydrolase FAAH, TRPV1 receptor and T-type calcium channels. Catalyzes C-2 oxidation of the indole ring of N-arachidonoyl-serotonin forming a less active product 2-oxo-N-arachidonoyl-serotonin. This is Cytochrome P450 2U1 (CYP2U1) from Bos taurus (Bovine).